The chain runs to 371 residues: Aspartate-semialdehyde dehydrogenase (371 aa).

Residues 11 to 14, 38 to 39, and Q75 each bind NADP(+); these read RGMV and TS. R104 provides a ligand contact to phosphate. C137 acts as the Acyl-thioester intermediate in catalysis. Q164 lines the substrate pocket. 167–168 provides a ligand contact to NADP(+); that stretch reads SG. E243 contributes to the substrate binding site. Phosphate is bound at residue K246. Substrate is bound at residue R269. Catalysis depends on H276, which acts as the Proton acceptor. Q352 contributes to the NADP(+) binding site.

This sequence belongs to the aspartate-semialdehyde dehydrogenase family. As to quaternary structure, homodimer.

It catalyses the reaction L-aspartate 4-semialdehyde + phosphate + NADP(+) = 4-phospho-L-aspartate + NADPH + H(+). It participates in amino-acid biosynthesis; L-lysine biosynthesis via DAP pathway; (S)-tetrahydrodipicolinate from L-aspartate: step 2/4. Its pathway is amino-acid biosynthesis; L-methionine biosynthesis via de novo pathway; L-homoserine from L-aspartate: step 2/3. It functions in the pathway amino-acid biosynthesis; L-threonine biosynthesis; L-threonine from L-aspartate: step 2/5. In terms of biological role, catalyzes the NADPH-dependent formation of L-aspartate-semialdehyde (L-ASA) by the reductive dephosphorylation of L-aspartyl-4-phosphate. In Buchnera aphidicola subsp. Schizaphis graminum (strain Sg), this protein is Aspartate-semialdehyde dehydrogenase.